Reading from the N-terminus, the 449-residue chain is Glutamyl-tRNA reductase (449 aa).

Substrate is bound by residues 49–52 (TCNR), S109, 114–116 (ETQ), and Q120. C50 (nucleophile) is an active-site residue. An NADP(+)-binding site is contributed by 189-194 (GAGKMS). A disordered region spans residues 427–449 (NFTHPREEMEESDEKRSYCGESR).

It belongs to the glutamyl-tRNA reductase family. As to quaternary structure, homodimer.

It carries out the reaction (S)-4-amino-5-oxopentanoate + tRNA(Glu) + NADP(+) = L-glutamyl-tRNA(Glu) + NADPH + H(+). The protein operates within porphyrin-containing compound metabolism; protoporphyrin-IX biosynthesis; 5-aminolevulinate from L-glutamyl-tRNA(Glu): step 1/2. Its function is as follows. Catalyzes the NADPH-dependent reduction of glutamyl-tRNA(Glu) to glutamate 1-semialdehyde (GSA). This is Glutamyl-tRNA reductase from Carboxydothermus hydrogenoformans (strain ATCC BAA-161 / DSM 6008 / Z-2901).